Here is a 370-residue protein sequence, read N- to C-terminus: Peptidyl-prolyl cis-trans isomerase D (370 aa).

Residues 11–176 (FFDISADGKP…EDWIISDCGE (166 aa)) enclose the PPIase cyclophilin-type domain. TPR repeat units lie at residues 218 to 251 (VTTL…LNDY), 269 to 302 (LSCY…EAID), and 307 to 340 (TKAL…SPED).

This sequence belongs to the cyclophilin-type PPIase family. PPIase D subfamily.

Its subcellular location is the cytoplasm. It carries out the reaction [protein]-peptidylproline (omega=180) = [protein]-peptidylproline (omega=0). Its function is as follows. PPIases accelerate the folding of proteins. It catalyzes the cis-trans isomerization of proline imidic peptide bonds in oligopeptides. This is Peptidyl-prolyl cis-trans isomerase D (CPR6) from Debaryomyces hansenii (strain ATCC 36239 / CBS 767 / BCRC 21394 / JCM 1990 / NBRC 0083 / IGC 2968) (Yeast).